The sequence spans 526 residues: GMP synthase [glutamine-hydrolyzing] (526 aa).

In terms of domain architecture, Glutamine amidotransferase type-1 spans 3 to 199 (KVAIIDFGSQ…FIKIAGCKTD (197 aa)). C83 functions as the Nucleophile in the catalytic mechanism. Active-site residues include H174 and E176. The region spanning 200–392 (WTMNSFLDEQ…LGISDEILMR (193 aa)) is the GMPS ATP-PPase domain. ATP is bound at residue 227–233 (SGGVDSS).

In terms of assembly, homodimer.

It catalyses the reaction XMP + L-glutamine + ATP + H2O = GMP + L-glutamate + AMP + diphosphate + 2 H(+). It participates in purine metabolism; GMP biosynthesis; GMP from XMP (L-Gln route): step 1/1. Functionally, catalyzes the synthesis of GMP from XMP. This chain is GMP synthase [glutamine-hydrolyzing], found in Ehrlichia canis (strain Jake).